A 465-amino-acid polypeptide reads, in one-letter code: Sensor histidine kinase ZraS (465 aa).

The Cytoplasmic segment spans residues 1-14; sequence MRFMQRSKDSLAKW. A helical membrane pass occupies residues 15–35; that stretch reads LSAILPVVIVGLVGLFAVTVI. The Periplasmic portion of the chain corresponds to 36 to 201; it reads RDYGRASEAD…ATQSGEKRNT (166 aa). The chain crosses the membrane as a helical span at residues 202-222; sequence LIILFALATVLLASVLSFFWY. Topologically, residues 223-465 are cytoplasmic; it reads RRYLRSRQLL…VNITRKDPQG (243 aa). The Histidine kinase domain occupies 251 to 458; it reads GVAHEIRNPL…TFTLWLPVNI (208 aa). Residue histidine 254 is modified to Phosphohistidine; by autocatalysis.

In terms of processing, autophosphorylated.

It localises to the cell inner membrane. The enzyme catalyses ATP + protein L-histidine = ADP + protein N-phospho-L-histidine.. With respect to regulation, activity of the ZraS/ZraR two-component system is repressed by the zinc-bound form of ZraP, which probably interacts with the periplasmic region of ZraS. Functionally, part of the Zra signaling pathway, an envelope stress response (ESR) system composed of the periplasmic accessory protein ZraP, the histidine kinase ZraS and the transcriptional regulator ZraR. The ZraPSR system contributes to antibiotic resistance and is important for membrane integrity in the presence of membrane-targeting biocides. ZraS is a member of the two-component regulatory system ZraS/ZraR. Functions as a membrane-associated sensor kinase that phosphorylates ZraR in response to high concentrations of Zn(2+) or Pb(2+) in the medium. Binds one zinc molecule with high affinity via its periplasmic domain, inducing a conformational change that is transmitted to the histidine kinase domain and leads to the activation of ZraR. The system has no direct role in zinc or copper resistance. The sequence is that of Sensor histidine kinase ZraS from Escherichia coli (strain K12).